The sequence spans 343 residues: Fructose-1,6-bisphosphatase class 1 (343 aa).

The Mg(2+) site is built by E90, D109, L111, and D112. Substrate contacts are provided by residues 112 to 115 (DGSS) and N199. E271 contributes to the Mg(2+) binding site.

Belongs to the FBPase class 1 family. Homotetramer. The cofactor is Mg(2+).

The protein resides in the cytoplasm. The catalysed reaction is beta-D-fructose 1,6-bisphosphate + H2O = beta-D-fructose 6-phosphate + phosphate. Its pathway is carbohydrate biosynthesis; Calvin cycle. This Rhodopseudomonas palustris (strain HaA2) protein is Fructose-1,6-bisphosphatase class 1.